Reading from the N-terminus, the 295-residue chain is Transcriptional regulator SirC (295 aa).

Residues 195–292 (EKVYNIIISD…KITPLSFMRT (98 aa)) form the HTH araC/xylS-type domain. 2 DNA-binding regions (H-T-H motif) span residues 212-233 (AEVA…AAEE) and 259-282 (ISQV…KRHF).

Positive regulator of the expression of the invasion-associated type III secretion system encoded within SPI-1 (pathogenicity island 1). In Salmonella typhi, this protein is Transcriptional regulator SirC (sirC).